The chain runs to 340 residues: Ribonucleoside-diphosphate reductase subunit beta (340 aa).

Fe cation contacts are provided by Asp-88 and His-122. Tyr-126 is a catalytic residue. Fe cation is bound at residue His-216.

The protein belongs to the ribonucleoside diphosphate reductase small chain family. In terms of assembly, tetramer of two alpha and two beta subunits. It depends on Fe cation as a cofactor.

It carries out the reaction a 2'-deoxyribonucleoside 5'-diphosphate + [thioredoxin]-disulfide + H2O = a ribonucleoside 5'-diphosphate + [thioredoxin]-dithiol. Functionally, provides the precursors necessary for DNA synthesis. Catalyzes the biosynthesis of deoxyribonucleotides from the corresponding ribonucleotides. This chain is Ribonucleoside-diphosphate reductase subunit beta (nrdF), found in Mycoplasma genitalium (strain ATCC 33530 / DSM 19775 / NCTC 10195 / G37) (Mycoplasmoides genitalium).